Here is a 56-residue protein sequence, read N- to C-terminus: uncharacterized protein (56 aa).

Residues 21–38 (HTHTPHPHHTHTHTHHTP) are compositionally biased toward basic residues. A disordered region spans residues 21-40 (HTHTPHPHHTHTHTHHTPTH).

This is an uncharacterized protein from Saccharomyces cerevisiae (strain ATCC 204508 / S288c) (Baker's yeast).